We begin with the raw amino-acid sequence, 288 residues long: 4-hydroxy-tetrahydrodipicolinate synthase (288 aa).

Pyruvate is bound at residue Thr42. Tyr129 functions as the Proton donor/acceptor in the catalytic mechanism. Lys158 serves as the catalytic Schiff-base intermediate with substrate. Residue Ile200 participates in pyruvate binding.

Belongs to the DapA family. As to quaternary structure, homotetramer; dimer of dimers.

The protein resides in the cytoplasm. The enzyme catalyses L-aspartate 4-semialdehyde + pyruvate = (2S,4S)-4-hydroxy-2,3,4,5-tetrahydrodipicolinate + H2O + H(+). It participates in amino-acid biosynthesis; L-lysine biosynthesis via DAP pathway; (S)-tetrahydrodipicolinate from L-aspartate: step 3/4. Catalyzes the condensation of (S)-aspartate-beta-semialdehyde [(S)-ASA] and pyruvate to 4-hydroxy-tetrahydrodipicolinate (HTPA). This is 4-hydroxy-tetrahydrodipicolinate synthase from Thermosipho melanesiensis (strain DSM 12029 / CIP 104789 / BI429).